The following is a 502-amino-acid chain: Protein DETOXIFICATION 55 (502 aa).

12 consecutive transmembrane segments (helical) span residues 30–50, 61–81, 112–132, 145–165, 185–205, 207–227, 261–283, 298–318, 344–364, 378–398, 419–439, and 447–467; these read IWDI…KNMT, LELA…YSVL, IFLL…LAPL, VASL…FLHP, VSVL…SLGV, GVAV…LCYI, VWST…WWWY, VALA…TIPT, ATVA…GTTV, VVLE…LANC, INFY…AFVW, and CYGL…VVYN.

Belongs to the multi antimicrobial extrusion (MATE) (TC 2.A.66.1) family.

It is found in the membrane. The polypeptide is Protein DETOXIFICATION 55 (Arabidopsis thaliana (Mouse-ear cress)).